A 58-amino-acid polypeptide reads, in one-letter code: Succinate dehydrogenase subunit 8B, mitochondrial (58 aa).

In terms of assembly, component of complex II composed of eight subunits in plants: four classical SDH subunits SDH1, SDH2, SDH3 and SDH4 (a flavoprotein (FP), an iron-sulfur protein (IP), and a cytochrome b composed of a large and a small subunit.), as well as four subunits unknown in mitochondria from bacteria and heterotrophic eukaryotes.

Its subcellular location is the mitochondrion inner membrane. It functions in the pathway carbohydrate metabolism; tricarboxylic acid cycle. This Oryza sativa subsp. japonica (Rice) protein is Succinate dehydrogenase subunit 8B, mitochondrial.